Reading from the N-terminus, the 312-residue chain is Tetraacyldisaccharide 4'-kinase (312 aa).

I60–T67 lines the ATP pocket.

It belongs to the LpxK family.

It carries out the reaction a lipid A disaccharide + ATP = a lipid IVA + ADP + H(+). Its pathway is glycolipid biosynthesis; lipid IV(A) biosynthesis; lipid IV(A) from (3R)-3-hydroxytetradecanoyl-[acyl-carrier-protein] and UDP-N-acetyl-alpha-D-glucosamine: step 6/6. Functionally, transfers the gamma-phosphate of ATP to the 4'-position of a tetraacyldisaccharide 1-phosphate intermediate (termed DS-1-P) to form tetraacyldisaccharide 1,4'-bis-phosphate (lipid IVA). This is Tetraacyldisaccharide 4'-kinase from Helicobacter pylori (strain HPAG1).